The sequence spans 166 residues: uncharacterized protein (166 aa).

The chain crosses the membrane as a helical span at residues 34–54 (FWGKVLVLTFGIICVVFVIFM). Disordered regions lie at residues 73 to 93 (QRTQ…SQQF) and 123 to 166 (TSTP…NDEV).

It localises to the vacuole membrane. This is an uncharacterized protein from Schizosaccharomyces pombe (strain 972 / ATCC 24843) (Fission yeast).